A 435-amino-acid polypeptide reads, in one-letter code: Serine--tRNA ligase (435 aa).

234-236 (TAE) lines the L-serine pocket. An ATP-binding site is contributed by 265–267 (RRE). E288 serves as a coordination point for L-serine. 352-355 (EISS) lines the ATP pocket. S388 contributes to the L-serine binding site.

Belongs to the class-II aminoacyl-tRNA synthetase family. Type-1 seryl-tRNA synthetase subfamily. In terms of assembly, homodimer. The tRNA molecule binds across the dimer.

The protein localises to the cytoplasm. The enzyme catalyses tRNA(Ser) + L-serine + ATP = L-seryl-tRNA(Ser) + AMP + diphosphate + H(+). It carries out the reaction tRNA(Sec) + L-serine + ATP = L-seryl-tRNA(Sec) + AMP + diphosphate + H(+). Its pathway is aminoacyl-tRNA biosynthesis; selenocysteinyl-tRNA(Sec) biosynthesis; L-seryl-tRNA(Sec) from L-serine and tRNA(Sec): step 1/1. Functionally, catalyzes the attachment of serine to tRNA(Ser). Is also able to aminoacylate tRNA(Sec) with serine, to form the misacylated tRNA L-seryl-tRNA(Sec), which will be further converted into selenocysteinyl-tRNA(Sec). This is Serine--tRNA ligase from Synechococcus sp. (strain JA-3-3Ab) (Cyanobacteria bacterium Yellowstone A-Prime).